The primary structure comprises 237 residues: MNVLTFLIAAAVSLAVVQADVISHDAVVPFAQPTATTTEQKAGVKFKPQIHISNGCHPYPAVDANGNTSGGLKPTGSSSAGCKGSGYGSQVYGRVATYNGVYAIMYSWYFPKDSPVTGLGHRHDWEHVVVWVDDIKLDSPSIIAVSPSAHSGYNIYYPPESNTIDGYSAKVDYSSSWVVINHALDSTTDAGETQDLIMWDQLTDAARTALENTDFGDANVPMKDGNFLTKVGNAYYA.

Positions 1–19 are cleaved as a signal peptide; sequence MNVLTFLIAAAVSLAVVQA. Asn-67 carries N-linked (GlcNAc...) asparagine glycosylation. Positions 103–113 match the Conserved undecapeptide motif motif; it reads AIMYSWYFPKD. Residues 120-126 carry the Conserved heptapetpide motif motif; the sequence is GHRHDWE.

This sequence belongs to the Necrosis inducing protein (NPP1) family.

It is found in the secreted. Functionally, secreted effector that acts as a pathogen-associated molecular pattern (PAMP) recognized by the plant immune system. Induces necrotic cell death and ethylene biosynthesis in parsley. Stimulates early induced host cellular responses implicated in elicitor signal transmission such as increased levels of cytoplasmic calcium, production of reactive oxygen species (ROS), and MAP kinase activation. Infiltration of NPP1 into leaves of Arabidopsis thaliana results in transcript accumulation of pathogenesis-related (PR) genes, production of ROS and ethylene, callose apposition, and hypersensitive response (HR)-like cell death. NPP1-mediated induction of the PR1 gene is salicylic acid-dependent, and requires both functional NDR1 and PAD4. The protein is Necrosis-inducing protein NPP1 of Phytophthora nicotianae (Potato buckeye rot agent).